Here is a 1379-residue protein sequence, read N- to C-terminus: METGGRARTGTPQPAAPGVWRARPAGGGGGGASSWLLDGNSWLLCYGFLYLALYAQVSQSKPCERTGSCFSGRCVNSTCLCDPGWVGDQCQHCQGRFKLTEPSGYLTDGPINYKYKTKCTWLIEGYPNAVLRLRFNHFATECSWDHMYVYDGDSIYAPLIAVLSGLIVPEIRGNETVPEVVTTSGYALLHFFSDAAYNLTGFNIFYSINSCPNNCSGHGKCTTSVSVPSQVYCECDKYWKGEACDIPYCKANCGSPDHGYCDLTGEKLCVCNDSWQGPDCSLNVPSTESYWILPNVKPFSPSVGRASHKAVLHGKFMWVIGGYTFNYSSFQMVLNYNLESSIWNVGTPSRGPLQRYGHSLALYQENIFMYGGRIETNDGNVTDELWVFNIHSQSWSTKTPTVLGHGQQYAVEGHSAHIMELDSRDVVMIIIFGYSAIYGYTSSIQEYHISSNTWLVPETKGAIVQGGYGHTSVYDEITKSIYVHGGYKALPGNKYGLVDDLYKYEVNTKTWTILKESGFARYLHSAVLINGAMLIFGGNTHNDTSLSNGAKCFSADFLAYDIACDEWKILPKPNLHRDVNRFGHSAVVINGSMYIFGGFSSVLLNDILVYKPPNCKAFRDEELCKNAGPGIKCVWNKNHCESWESGNTNNILRAKCPPKTAASDDRCYRYADCASCTANTNGCQWCDDKKCISANSNCSMSVKNYTKCHVRNEQICNKLTSCKSCSLNLNCQWDQRQQECQALPAHLCGEGWSHIGDACLRVNSSRENYDNAKLYCYNLSGNLASLTTSKEVEFVLDEIQKYTQQKVSPWVGLRKINISYWGWEDMSPFTNTTLQWLPGEPNDSGFCAYLERAAVAGLKANPCTSMANGLVCEKPVVSPNQNARPCKKPCSLRTSCSNCTSNGMECMWCSSTKRCVDSNAYIISFPYGQCLEWQTATCSPQNCSGLRTCGQCLEQPGCGWCNDPSNTGRGHCIEGSSRGPMKLIGMHHSEMVLDTNLCPKEKNYEWSFIQCPACQCNGHSTCINNNVCEQCKNLTTGKQCQDCMPGYYGDPTNGGQCTACTCSGHANICHLHTGKCFCTTKGIKGDQCQLCDSENRYVGNPLRGTCYYSLLIDYQFTFSLLQEDDRHHTAINFIANPEQSNKNLDISINASNNFNLNITWSVGSTAGTISGEETSIVSKNNIKEYRDSFSYEKFNFRSNPNITFYVYVSNFSWPIKIQIAFSQHNTIMDLVQFFVTFFSCFLSLLLVAAVVWKIKQTCWASRRREQLLRERQQMASRPFASVDVALEVGAEQTEFLRGPLEGAPKPIAIEPCAGNRAAVLTVFLCLPRGSSGAPPPGQSGLAIASALIDISQQKASDSKDKTSGVRNRKHLSTRQGTCV.

The tract at residues methionine 1–arginine 23 is disordered. The signal sequence occupies residues methionine 1–alanine 52. In terms of domain architecture, EGF-like 1 spans leucine 53 to glutamine 91. At leucine 53–leucine 1230 the chain is on the extracellular side. Intrachain disulfides connect cysteine 63/cysteine 79, cysteine 81/cysteine 90, and cysteine 93/cysteine 119. Asparagine 76 is a glycosylation site (N-linked (GlcNAc...) asparagine). The CUB domain maps to cysteine 93–asparagine 209. 2 N-linked (GlcNAc...) asparagine glycosylation sites follow: asparagine 174 and asparagine 198. An EGF-like 2 domain is found at serine 207–aspartate 245. 3 cysteine pairs are disulfide-bonded: cysteine 211/cysteine 221, cysteine 215/cysteine 233, and cysteine 235/cysteine 244. Kelch repeat units lie at residues phenylalanine 316–glutamate 365, isoleucine 367–serine 415, valine 427–aspartate 475, serine 480–glycine 531, methionine 533–glycine 591, and serine 592–asparagine 638. N-linked (GlcNAc...) asparagine glycosylation occurs at asparagine 380. PSI domains are found at residues asparagine 614–proline 657, arginine 666–histidine 709, and isoleucine 715–leucine 760. The C-type lectin domain maps to isoleucine 755–glutamate 873. Residues asparagine 763, asparagine 778, and asparagine 898 are each glycosylated (N-linked (GlcNAc...) asparagine). A disulfide bridge links cysteine 776 with cysteine 872. 2 consecutive PSI domains span residues proline 889–serine 939 and asparagine 942–proline 1012. 8 disulfides stabilise this stretch: cysteine 1014–cysteine 1022, cysteine 1016–cysteine 1028, cysteine 1031–cysteine 1040, cysteine 1043–cysteine 1057, cysteine 1060–cysteine 1069, cysteine 1062–cysteine 1076, cysteine 1078–cysteine 1088, and cysteine 1091–cysteine 1106. Laminin EGF-like domains lie at cysteine 1014 to alanine 1059 and cysteine 1060 to tyrosine 1108. Asparagine 1157 carries N-linked (GlcNAc...) asparagine glycosylation. Residues valine 1231–valine 1251 traverse the membrane as a helical segment. Over tryptophan 1252–valine 1379 the chain is Cytoplasmic. The segment at lysine 1354–valine 1379 is disordered.

As to quaternary structure, interacts with MC4R.

It is found in the membrane. Functionally, may play a role in melanocortin signaling pathways that regulate energy homeostasis. This chain is Attractin-like protein 1 (ATRNL1), found in Homo sapiens (Human).